The chain runs to 136 residues: uncharacterized protein (136 aa).

This is an uncharacterized protein from Fowl adenovirus A serotype 1 (strain CELO / Phelps) (FAdV-1).